A 161-amino-acid chain; its full sequence is EP300-interacting inhibitor of differentiation 2B (161 aa).

Disordered regions lie at residues 1–26 (MAEP…GTAS) and 54–77 (ARSM…GLAS).

As to quaternary structure, homodimer and heterodimer with EID2. Interacts with HDAC1 and HDAC2.

Its subcellular location is the nucleus. Functionally, acts as a repressor of MYOD-dependent transcription, glucocorticoid receptor-dependent transcription, and muscle differentiation. The chain is EP300-interacting inhibitor of differentiation 2B from Homo sapiens (Human).